A 285-amino-acid chain; its full sequence is Methanethiol S-methyltransferase 1 (285 aa).

A run of 5 helical transmembrane segments spans residues 55 to 75 (AYLVFFVTILYAIGFVMGLVV), 88 to 108 (AEAVIINLLLMALFAVQHSVM), 132 to 152 (LFASLSLLLLFWQWRPLPTVI), 162 to 182 (VTLVTVSFAGWVLVFTSTFII), and 224 to 244 (FIVAFWAAPVMTAGHLLFAAV).

Belongs to the nurim family.

The protein localises to the membrane. It catalyses the reaction methanethiol + S-adenosyl-L-methionine = dimethyl sulfide + S-adenosyl-L-homocysteine + H(+). Its function is as follows. Catalyzes the methylation of methanethiol (MeSH) to yield dimethylsulphide (DMS). The sequence is that of Methanethiol S-methyltransferase 1 from Bradyrhizobium diazoefficiens (strain JCM 10833 / BCRC 13528 / IAM 13628 / NBRC 14792 / USDA 110).